The following is a 404-amino-acid chain: MKRIRDLWVRTNLIKKIGIGVVIGLLLGILLPDVTAIGILGQLFVGALKAIAPLLVFALVVQAISHQRSGQQTNMTLIIVLYLLGTFLAALVAVIANYLFPLTLTLNTSVNTELSPPQGIVQVFQTLLLKLVDNPINALATANYIGVLAWALIFGLALKSVPSDFKHLIKTAADVTSQIVVWIINVAPIGIMGLVFSTVSENGISILSDYALLILVLVGTMLFVALVVNPLLAFVLTHQNPYPLVFRCLKDSGLTAFFTRSSAANIPVNLQLCEDLGLSQATYLVSIPLGAMINMGGAAITINVLTLAAVNTFGIQIDFLTALLLSVVAAISACGASGVTGGSLLLIPVACSLFGISSDLAMQVVGVGFIVGVIQDSCETALNSSTDVLFTAIAEKAFWKQKKA.

Transmembrane regions (helical) follow at residues 17–37, 44–64, 75–95, 138–158, 179–199, 212–232, 287–307, 319–339, and 354–374; these read IGIG…VTAI, FVGA…VQAI, MTLI…VAVI, ALAT…GLAL, IVVW…FSTV, LLIL…NPLL, IPLG…VLTL, FLTA…ASGV, and FGIS…VGVI.

This sequence belongs to the dicarboxylate/amino acid:cation symporter (DAACS) (TC 2.A.23) family.

Its subcellular location is the cell membrane. The catalysed reaction is L-serine(in) + Na(+)(in) = L-serine(out) + Na(+)(out). The enzyme catalyses L-threonine(in) + Na(+)(in) = L-threonine(out) + Na(+)(out). In terms of biological role, involved in the import of serine and threonine into the cell, with the concomitant import of sodium (symport system). This Streptococcus equi subsp. zooepidemicus (strain H70) protein is Serine/threonine transporter SstT.